A 308-amino-acid polypeptide reads, in one-letter code: D-alanine--D-alanine ligase (308 aa).

The 198-residue stretch at K104 to D301 folds into the ATP-grasp domain. Residue I130–T185 coordinates ATP. Mg(2+) contacts are provided by D255, E268, and N270.

Belongs to the D-alanine--D-alanine ligase family. The cofactor is Mg(2+). It depends on Mn(2+) as a cofactor.

It is found in the cytoplasm. The enzyme catalyses 2 D-alanine + ATP = D-alanyl-D-alanine + ADP + phosphate + H(+). The protein operates within cell wall biogenesis; peptidoglycan biosynthesis. In terms of biological role, cell wall formation. This is D-alanine--D-alanine ligase from Acinetobacter baumannii (strain AB307-0294).